The primary structure comprises 341 residues: Mitochondrial ubiquitin ligase activator of nfkb 1-A (341 aa).

Residues 1-5 (MEDFP) lie on the Cytoplasmic side of the membrane. The helical transmembrane segment at 6–26 (VLEMVCLGSSVALSGLFYYIY) threads the bilayer. Topologically, residues 27-233 (RKKRKTVDKL…LLMEQEGQAE (207 aa)) are mitochondrial intermembrane. A helical membrane pass occupies residues 234 to 254 (VWRVFACICALAGVAVLIWTG). The Cytoplasmic segment spans residues 255–341 (RRYYRQLKLR…IKRVVPLYQA (87 aa)). The RING-type zinc-finger motif lies at 292–329 (CVICLSNPRGCVLLDCGHVCCCFRCYQALPQPFCPICR).

As to quaternary structure, homooligomer.

The protein resides in the mitochondrion outer membrane. The catalysed reaction is S-ubiquitinyl-[E2 ubiquitin-conjugating enzyme]-L-cysteine + [acceptor protein]-L-lysine = [E2 ubiquitin-conjugating enzyme]-L-cysteine + N(6)-ubiquitinyl-[acceptor protein]-L-lysine.. Its pathway is protein modification; protein ubiquitination. E3 ubiquitin-protein ligase that plays a role in the control of mitochondrial morphology. Promotes mitochondrial fragmentation and influences mitochondrial localization. Inhibits cell growth. E3 ubiquitin ligases accept ubiquitin from an E2 ubiquitin-conjugating enzyme in the form of a thioester and then directly transfer the ubiquitin to targeted substrates. The chain is Mitochondrial ubiquitin ligase activator of nfkb 1-A (mul1a) from Danio rerio (Zebrafish).